We begin with the raw amino-acid sequence, 197 residues long: Probable GTP-binding protein EngB (197 aa).

Residues 26–197 (DLPEIALAGR…TSWDAILESL (172 aa)) form the EngB-type G domain. Residues 34–41 (GRSNVGKS), 61–65 (GKTQS), 79–82 (DVPG), 146–149 (TKAD), and 178–180 (FSS) contribute to the GTP site. The Mg(2+) site is built by serine 41 and threonine 63.

This sequence belongs to the TRAFAC class TrmE-Era-EngA-EngB-Septin-like GTPase superfamily. EngB GTPase family. It depends on Mg(2+) as a cofactor.

In terms of biological role, necessary for normal cell division and for the maintenance of normal septation. The chain is Probable GTP-binding protein EngB from Streptococcus mutans serotype c (strain ATCC 700610 / UA159).